The sequence spans 820 residues: Leucine--tRNA ligase (820 aa).

A 'HIGH' region motif is present at residues 40-51; that stretch reads PYPSGAGLHVGH. Residues 601 to 605 carry the 'KMSKS' region motif; sequence KMSKS. Residue Lys604 participates in ATP binding.

Belongs to the class-I aminoacyl-tRNA synthetase family.

The protein resides in the cytoplasm. The catalysed reaction is tRNA(Leu) + L-leucine + ATP = L-leucyl-tRNA(Leu) + AMP + diphosphate. In Chlamydia felis (strain Fe/C-56) (Chlamydophila felis), this protein is Leucine--tRNA ligase.